Here is a 465-residue protein sequence, read N- to C-terminus: Ribulose bisphosphate carboxylase large chain (465 aa).

K4 is subject to N6,N6,N6-trimethyllysine. Residues N113 and T163 each contribute to the substrate site. Catalysis depends on K165, which acts as the Proton acceptor. K167 lines the substrate pocket. The Mg(2+) site is built by K191, D193, and E194. An N6-carboxylysine modification is found at K191. The active-site Proton acceptor is the H284. Substrate contacts are provided by R285, H317, and S369.

Belongs to the RuBisCO large chain family. Type I subfamily. In terms of assembly, heterohexadecamer of 8 large chains and 8 small chains; disulfide-linked. The disulfide link is formed within the large subunit homodimers. It depends on Mg(2+) as a cofactor. The disulfide bond which can form in the large chain dimeric partners within the hexadecamer appears to be associated with oxidative stress and protein turnover.

Its subcellular location is the plastid. It is found in the chloroplast. It catalyses the reaction 2 (2R)-3-phosphoglycerate + 2 H(+) = D-ribulose 1,5-bisphosphate + CO2 + H2O. The catalysed reaction is D-ribulose 1,5-bisphosphate + O2 = 2-phosphoglycolate + (2R)-3-phosphoglycerate + 2 H(+). RuBisCO catalyzes two reactions: the carboxylation of D-ribulose 1,5-bisphosphate, the primary event in carbon dioxide fixation, as well as the oxidative fragmentation of the pentose substrate in the photorespiration process. Both reactions occur simultaneously and in competition at the same active site. The chain is Ribulose bisphosphate carboxylase large chain from Securidaca diversifolia (Easter flower).